A 217-amino-acid chain; its full sequence is Adenylate kinase (217 aa).

10 to 15 (GAGKGT) provides a ligand contact to ATP. The tract at residues 30 to 59 (STGDILRAAVSEMTPMGVKAKGYMESGALV) is NMP. AMP contacts are provided by residues T31, R36, 57-59 (ALV), 85-88 (GFPR), and Q92. Residues 126–163 (GRRTCRLCGKGYHVVFDPPRVSGRCDECLGELFQRDDD) form an LID region. R127 contacts ATP. Residues C130, C133, C150, and C153 each contribute to the Zn(2+) site. Positions 160 and 171 each coordinate AMP. Residue G199 coordinates ATP.

Belongs to the adenylate kinase family. In terms of assembly, monomer.

Its subcellular location is the cytoplasm. It carries out the reaction AMP + ATP = 2 ADP. Its pathway is purine metabolism; AMP biosynthesis via salvage pathway; AMP from ADP: step 1/1. Catalyzes the reversible transfer of the terminal phosphate group between ATP and AMP. Plays an important role in cellular energy homeostasis and in adenine nucleotide metabolism. The protein is Adenylate kinase of Geotalea uraniireducens (strain Rf4) (Geobacter uraniireducens).